An 863-amino-acid polypeptide reads, in one-letter code: Leucine--tRNA ligase (863 aa).

Positions 41–51 (PYPSGRIHIGH) match the 'HIGH' region motif. The 'KMSKS' region motif lies at 627–631 (KMSKS). Lys-630 is a binding site for ATP.

This sequence belongs to the class-I aminoacyl-tRNA synthetase family.

Its subcellular location is the cytoplasm. It carries out the reaction tRNA(Leu) + L-leucine + ATP = L-leucyl-tRNA(Leu) + AMP + diphosphate. In Jannaschia sp. (strain CCS1), this protein is Leucine--tRNA ligase.